The primary structure comprises 237 residues: Lectin (237 aa).

Residues Glu-8 and Asp-10 each coordinate Mn(2+). The Ca(2+) site is built by Asp-10, Tyr-12, Asn-14, and Asp-19. A carbohydrate-binding residues include Tyr-12 and Asn-14. Mn(2+) contacts are provided by Asp-19 and His-24. An a carbohydrate-binding site is contributed by 98-100 (GLY). Asp-208 serves as a coordination point for Ca(2+). The a carbohydrate site is built by Gly-227 and Arg-228.

It belongs to the leguminous lectin family. As to quaternary structure, homotetramer; dimer of dimers. In terms of processing, concanavalin A-like lectins of the Diocleinae subtribe undergo proteolytic processing referred to as circular permutation. The propeptide is split into an N-terminal and a C-terminal part, the gamma and beta chain, respectively. These are then religated in beta-gamma order to form the mature alpha chain. The beta and gamma chains can often be detected in cell extracts. Residues 1-118 of the mature chain, as displayed here, probably constitute the beta chain in the propeptide, residues 119-237 the gamma chain.

In terms of biological role, D-mannose/D-glucose-binding lectin with hemagglutinating activity towards rabbit and human erythrocytes. In rats, induces dose-dependent paw edema. Has low cytotoxicity against Artemisia sp. In Macropsychanthus comosus (Sea purse), this protein is Lectin.